The sequence spans 256 residues: Follistatin-related protein 3 (256 aa).

Residues 1–23 (MRSGALWPLLWGALVWTVGSVGA) form the signal peptide. One can recognise a TB domain in the interval 34 to 105 (GVCWLQQGRE…SCDGVECGPG (72 aa)). Disulfide bonds link Cys36-Cys59, Cys46-Cys90, Cys60-Cys93, Cys97-Cys108, Cys102-Cys117, Cys119-Cys151, Cys123-Cys144, and Cys133-Cys165. Asn71 carries an N-linked (GlcNAc...) asparagine glycan. One can recognise a Follistatin-like 1 domain in the interval 97–117 (CDGVECGPGKACRMLGGRPHC). 2 Kazal-like domains span residues 111–167 (LGGR…RCQK) and 187–243 (SAHC…ICTG). Residues 168–191 (SCAQVVCPRPQSCLVDQTGSAHCV) form the Follistatin-like 2 domain. 3 disulfide bridges follow: Cys193–Cys227, Cys198–Cys220, and Cys209–Cys241. An N-linked (GlcNAc...) asparagine glycan is attached at Asn213.

As to quaternary structure, interacts with INHBA and INHBB. Interacts with FN1. Interacts with ADAM12. Interacts with MLLT10; the interaction enhances MLLT10 in vitro transcriptional activity and self-association. Interacts with MSTN. Abundantly expressed in heart, lung, kidney and testis. Continuously expressed in embryonic heart.

The protein localises to the secreted. Its subcellular location is the nucleus. Its function is as follows. The secreted form is a binding and antagonizing protein for members of the TGF-beta family, such as activin, BMP2 and MSTN. Inhibits activin A-, activin B-, BMP2- and MSDT-induced cellular signaling; more effective on activin A than on activin B. Involved in bone formation; inhibits osteoclast differentiation. Involved in hematopoiesis; involved in differentiation of hemopoietic progenitor cells, increases hematopoietic cell adhesion to fibronectin and seems to contribute to the adhesion of hematopoietic precursor cells to the bone marrow stroma. The nuclear form is probably involved in transcriptional regulation via interaction with MLLT10. The chain is Follistatin-related protein 3 (Fstl3) from Mus musculus (Mouse).